The following is a 709-amino-acid chain: MRFSKLSLAITTTLVTANALAQSVELDSINVIATRDPSRFTYTPQKQSKDSLLSKQATSVAAALEDIPNVDVRGGSRSIAQKPNIRGLSDNRVVQVIDGVRQNFDLAHRGSYFLPMSLIQEIEVIKGPSSSLWGSGALGGVVAMRTPNALDLLKNNDKFGVKIRQGYQTANNLSEKDVSVFAANDKFDVLISGFYNNADNLRIGKGNKLNNTAYKQFGGLAKFGWQINDANRVELSHRETRFKQTAPGNNEAKNELTNEQIIEKINEYHNPLNNFPPKAKPSLEEFYSGVRARLGGVSYLSDQQIPDQSTVFNYYLTPDNPYLNTHIALYNNKTIEKEQRKVSGVKDQTKLTTRGINLRNSSELSHISFVYGVDYMRDKISTERGTNDKDAKFRAEPYNANSNTTGVYLIAHIPLFGEKLLLSPSVRYDHYDTSSKTVKYKDNHLSPATKLTWKVTNWLDFTAKYNEAFRAPSMQERFVSGAHFGTSTRVGDIINSFVANPNLRPETAKNKEITANLHFDSLFKQGDKFKIEATYFRNDVKDLINLKRLDDPNANGALSRTNSQYQNIANARLSGIELQAQYQTERLTLFTNYGSTKGRDKDSGEALSNIAASKIGVGADYALVKDKFTVGATITHYAAQHRVPKDHAVTYPSYILTDLRATYAPLKGEWKNLRLDFALENLFDRKYQPAFSLMEGTGRNAKISAVYSF.

An N-terminal signal peptide occupies residues 1 to 21 (MRFSKLSLAITTTLVTANALA). The 112-residue stretch at 36–147 (DPSRFTYTPQ…LGGVVAMRTP (112 aa)) folds into the TBDR plug domain. The 552-residue stretch at 158 to 709 (KFGVKIRQGY…NAKISAVYSF (552 aa)) folds into the TBDR beta-barrel domain. The TonB C-terminal box signature appears at 692–709 (SLMEGTGRNAKISAVYSF).

This sequence belongs to the TonB-dependent receptor family.

It is found in the cell outer membrane. Required for utilization of free heme at low concentrations. The sequence is that of Heme/hemopexin utilization protein C (hxuC) from Haemophilus influenzae (strain 86-028NP).